Reading from the N-terminus, the 138-residue chain is Large ribosomal subunit protein eL14B (138 aa).

S2 is subject to N-acetylserine.

The protein belongs to the eukaryotic ribosomal protein eL14 family. As to quaternary structure, component of the large ribosomal subunit (LSU). Mature yeast ribosomes consist of a small (40S) and a large (60S) subunit. The 40S small subunit contains 1 molecule of ribosomal RNA (18S rRNA) and 33 different proteins (encoded by 57 genes). The large 60S subunit contains 3 rRNA molecules (25S, 5.8S and 5S rRNA) and 46 different proteins (encoded by 81 genes). In terms of processing, N-terminally acetylated by acetyltransferase NatA.

The protein resides in the cytoplasm. Component of the ribosome, a large ribonucleoprotein complex responsible for the synthesis of proteins in the cell. The small ribosomal subunit (SSU) binds messenger RNAs (mRNAs) and translates the encoded message by selecting cognate aminoacyl-transfer RNA (tRNA) molecules. The large subunit (LSU) contains the ribosomal catalytic site termed the peptidyl transferase center (PTC), which catalyzes the formation of peptide bonds, thereby polymerizing the amino acids delivered by tRNAs into a polypeptide chain. The nascent polypeptides leave the ribosome through a tunnel in the LSU and interact with protein factors that function in enzymatic processing, targeting, and the membrane insertion of nascent chains at the exit of the ribosomal tunnel. This is Large ribosomal subunit protein eL14B from Saccharomyces cerevisiae (strain ATCC 204508 / S288c) (Baker's yeast).